Here is a 193-residue protein sequence, read N- to C-terminus: Protein SPEAR3 (193 aa).

2 disordered regions span residues 1 to 50 (MGSS…GVAQ) and 85 to 104 (GYPS…SSPP). Residues 14-26 (SSSSSPTSSSSSP) are compositionally biased toward low complexity. Residues 44 to 52 (RGLGVAQLE) carry the SPL motif. A compositionally biased stretch (low complexity) spans 86–101 (YPSIPSSSPSFSYASS). The EAR signature appears at 187–193 (LDLELRL).

As to quaternary structure, interacts with TPL and the TPR corepressors TPR1, TPR2, TPR3, TPR4, and with the TCP transcription factors TCP2, TCP3, TCP4, TCP5, TCP10, TCP13, TCP17 and TCP24. Interacts with SPL and SPEAR2. Expressed in shoot apical meristem, cotyledons and leaves. Detected at the leaf margins and in the vascular bundles at the base of the leaves.

The protein localises to the nucleus. In terms of biological role, transcriptional regulator of leaf development. Acts as an adapter-like transcriptional repressor recruiting TPL/TPR corepressors to inhibit the CIN-like TCP transcription factors. The protein is Protein SPEAR3 of Arabidopsis thaliana (Mouse-ear cress).